The following is a 301-amino-acid chain: Homoserine kinase (301 aa).

81–91 (RPSSGLGSSAA) contacts ATP.

The protein belongs to the GHMP kinase family. Homoserine kinase subfamily.

The protein resides in the cytoplasm. The catalysed reaction is L-homoserine + ATP = O-phospho-L-homoserine + ADP + H(+). It participates in amino-acid biosynthesis; L-threonine biosynthesis; L-threonine from L-aspartate: step 4/5. In terms of biological role, catalyzes the ATP-dependent phosphorylation of L-homoserine to L-homoserine phosphate. The chain is Homoserine kinase from Halobacterium salinarum (strain ATCC 29341 / DSM 671 / R1).